A 154-amino-acid polypeptide reads, in one-letter code: uncharacterized protein (154 aa).

A disordered region spans residues 1–37; it reads MDNLKEKPLSYNINNNNLNNNNNNNNNNNNNNNNINN. Low complexity predominate over residues 12–37; that stretch reads NINNNNLNNNNNNNNNNNNNNNNINN. N-linked (GlcNAc...) asparagine glycosylation is present at Asn82. A helical transmembrane segment spans residues 116-136; that stretch reads IIITTIVVLLMIAVSLGLILA. A glycan (N-linked (GlcNAc...) asparagine) is linked at Asn149.

The protein localises to the membrane. This is an uncharacterized protein from Dictyostelium discoideum (Social amoeba).